The chain runs to 177 residues: ATP synthase subunit delta (177 aa).

Belongs to the ATPase delta chain family. As to quaternary structure, F-type ATPases have 2 components, F(1) - the catalytic core - and F(0) - the membrane proton channel. F(1) has five subunits: alpha(3), beta(3), gamma(1), delta(1), epsilon(1). F(0) has three main subunits: a(1), b(2) and c(10-14). The alpha and beta chains form an alternating ring which encloses part of the gamma chain. F(1) is attached to F(0) by a central stalk formed by the gamma and epsilon chains, while a peripheral stalk is formed by the delta and b chains.

It localises to the cell membrane. Its function is as follows. F(1)F(0) ATP synthase produces ATP from ADP in the presence of a proton or sodium gradient. F-type ATPases consist of two structural domains, F(1) containing the extramembraneous catalytic core and F(0) containing the membrane proton channel, linked together by a central stalk and a peripheral stalk. During catalysis, ATP synthesis in the catalytic domain of F(1) is coupled via a rotary mechanism of the central stalk subunits to proton translocation. Functionally, this protein is part of the stalk that links CF(0) to CF(1). It either transmits conformational changes from CF(0) to CF(1) or is implicated in proton conduction. The sequence is that of ATP synthase subunit delta from Exiguobacterium sibiricum (strain DSM 17290 / CCUG 55495 / CIP 109462 / JCM 13490 / 255-15).